A 283-amino-acid chain; its full sequence is MFS-type transporter eupM (283 aa).

The next 7 membrane-spanning stretches (helical) occupy residues 68 to 88 (LVAWLQVLGAWVLFFNTWGAM), 111 to 131 (IAWIGSIQTFCLQAMGLVAGP), 136 to 156 (GGFKILIVTGSVGVVSGYMML), 165 to 185 (VLLAQGFLIGIAEGCLFTPMI), 196 to 216 (IGLATGIASSGSSMGGVVYPI), 227 to 247 (FAWTTRVLGFISLGMLLIPII), and 263 to 283 (LIDLSVFTDWPFIVFVIATMI).

This sequence belongs to the major facilitator superfamily. Monocarboxylate porter (TC 2.A.1.13) family.

The protein resides in the membrane. MFS-type transporter; part of the gene cluster that mediates the biosynthesis of eupenifeldin, a bistropolone meroterpenoid that acts as an antitumor agent. This chain is MFS-type transporter eupM, found in Phoma sp.